We begin with the raw amino-acid sequence, 381 residues long: Palmitoyltransferase SWF1 (381 aa).

Topologically, residues 1–4 (MWLK) are lumenal. Residues 5-25 (IYLLSILAISVFTFVFLFGAL) traverse the membrane as a helical segment. Residues 26–64 (PQFEDTAVWKFRKWLSNRPAAIRSWDSKYCGGRLSVVGD) lie on the Cytoplasmic side of the membrane. Residues 65–85 (FCGSVVAPAAPWSVPILYCAF) form a helical membrane-spanning segment. Residues 86–107 (TTYMFSAYYEDLHPFIAENHWY) lie on the Lumenal side of the membrane. The helical transmembrane segment at 108-128 (YAWLAPVAYTILVVSFVLATF) threads the bilayer. Topologically, residues 129–201 (SDPGKITKQN…NTVGLYNYRW (73 aa)) are cytoplasmic. A DHHC domain is found at 157-207 (TECSTCKFTKPARSKHDRFTNKCVAKFDHYCLWINNTVGLYNYRWFLFFLL). The active-site S-palmitoyl cysteine intermediate is the Cys187. A helical membrane pass occupies residues 202 to 222 (FLFFLLGNVWTLCWGALLAGL). Residues 223–257 (KMIVMVAAEYKDHPKPLPSIFSQWWQVMITNENKR) are Lumenal-facing. Residues 258–278 (VGIIFLLSVSTGALACAFTAM) form a helical membrane-spanning segment. At 279–381 (HFYYIYLGAT…KAVMFPNSAY (103 aa)) the chain is on the cytoplasmic side.

This sequence belongs to the DHHC palmitoyltransferase family. SWF1 subfamily.

Its subcellular location is the endoplasmic reticulum membrane. The enzyme catalyses L-cysteinyl-[protein] + hexadecanoyl-CoA = S-hexadecanoyl-L-cysteinyl-[protein] + CoA. Palmitoyltransferase that targets several endosomal SNAREs. Palmitoylates the SNAREs at cysteine residues close to the cytoplasmic end of their transmembrane domain. May have a role in the cellular quality control of transmembrane domain-containing proteins. The sequence is that of Palmitoyltransferase SWF1 (SWF1) from Yarrowia lipolytica (strain CLIB 122 / E 150) (Yeast).